A 186-amino-acid polypeptide reads, in one-letter code: Membrane protein Rv1476 (186 aa).

The helical transmembrane segment at 138 to 158 (FPWSALTIVLLIGVLAAAVGA) threads the bilayer. Residues 166–186 (RRSATSTDAAPGAGDDLNQGV) form a disordered region.

It localises to the membrane. In terms of biological role, may affect the expression of genes linked to host macrophage apoptosis and immune response, thereby promoting the survival of M.tuberculosis in host macrophages. Overexpression of the gene increases susceptibility of the bacteria to various stresses, but promotes intracellular survival in host macrophages. It has no impact on the growth rate in vitro. Overexpression causes changes in the transcriptome of THP-1 cells, including expression of genes involved in cell proliferation, fatty acid degradation, cytokine-cytokine receptor interaction and immune response pathways. This Mycobacterium tuberculosis (strain ATCC 25618 / H37Rv) protein is Membrane protein Rv1476.